Here is a 415-residue protein sequence, read N- to C-terminus: MEEIGIILPEKDDQVTDAKGLPFAGPQTFDELESEDLYTKYKKLQRMLEFLEVQEEYIKDEQRNLKKEYLHAQEEVKRIQSVPLVIGQFLEAVDQNTGIVGSTTGSNYYVRILSTIDRELLKPSASVALHKHSNALVDVLPPEADSSISMLQADEKPDVQYSDIGGMDTQKQEIREAVELPLTHVELYRQIGIEPPRGVLMYGPPGCGKTMLANAVAHHTTAAFIRVVGSEFVQKYLGEGPRMVRDVFRLAKENSPAIIFIDEIDAIATKRFDAQTGADREVQRILLELLNQMDGFDQTTNVKVIMATNRADTLDPALLRPGRLDRKIEFPLPDRRQKRLIFSTITAKMNLSEEVDLEEFVARPDRVSGADINAICQEAGMNAVRENRYIVLPKDFEKGYKNNIKKDESEYEFYK.

An ATP-binding site is contributed by 203-210 (GPPGCGKT).

Belongs to the AAA ATPase family.

The protein resides in the cytoplasm. It localises to the nucleus. In terms of biological role, the 26S proteasome is involved in the ATP-dependent degradation of ubiquitinated proteins. The regulatory (or ATPase) complex confers ATP dependency and substrate specificity to the 26S complex. The sequence is that of 26S proteasome regulatory subunit 6B from Manduca sexta (Tobacco hawkmoth).